The sequence spans 424 residues: MASRARMERNYRGLSHIDYVHKKMWVVQAVCFGIAVLVFFGTLVAASINLTEGFPCFFAAVVDYRTVNTTLVHTGLTYPRLGGVVPVLFFQTKAVVFFFYATSIVFVFLVCYITVGAIISSKKHVGAAYMGSGAFVFSLMASPLTILLGTVSIWLLQAVVIVLAHKLIVLAAAVYLVHFSTITFFYGYFCGRGVDSKVYAEDISSAKDIDGSLHKLIGNVRAMMVNLLSIVYSIILIMSSLMFGMLLANSFTLKFWHVIVTVLITTSVLTLIYLLVIEFLIARYVHIILGAYIGLLIGYGMLWTTTCDYVNRFYYAMGANASNLRIACHSVLAVFTVLILLAMVVRLIRASLYHRRRSTRAYAKAMKLQQNVKHRLRQLRRSYKQRGSQSEDERALTQSRSAEASDEDTIYDRVYSGSESEWDD.

Residues Met1–Lys23 are Intravirion-facing. A helical transmembrane segment spans residues Met24–Val44. The Virion surface portion of the chain corresponds to Ala45 to Ala94. A helical membrane pass occupies residues Val95–Val115. At Gly116 to Pro143 the chain is on the intravirion side. The chain crosses the membrane as a helical span at residues Leu144–Ala164. Residues His165 to Lys166 lie on the Virion surface side of the membrane. A helical transmembrane segment spans residues Leu167–Gly187. Residues Tyr188–Asn226 lie on the Intravirion side of the membrane. A helical transmembrane segment spans residues Leu227–Leu247. Topologically, residues Ala248–Thr261 are virion surface. The helical transmembrane segment at Val262 to Ala282 threads the bilayer. Arg283 is a topological domain (intravirion). Residues Tyr284–Thr304 form a helical membrane-spanning segment. Over Thr305–Ala327 the chain is Virion surface. A helical membrane pass occupies residues Cys328–Ile348. Topologically, residues Arg349 to Asp424 are intravirion. A disordered region spans residues Ser382–Asp424.

It belongs to the herpesviridae glycoprotein M family. As to quaternary structure, interacts (via N-terminus) with gN (via N-terminus). The gM-gN heterodimer forms the gCII complex.

Its subcellular location is the virion membrane. It localises to the host Golgi apparatus. It is found in the host trans-Golgi network. The protein resides in the host endosome membrane. The protein localises to the host nucleus inner membrane. Envelope glycoprotein important for virion assembly and egress. Plays a role in the correct incorporation of gH-gL into virion membrane. Directs the glycoprotein N (gN) to the host trans-Golgi network. The chain is Envelope glycoprotein M from Gallid herpesvirus 2 (strain Chicken/Md5/ATCC VR-987) (GaHV-2).